The sequence spans 347 residues: Heat-inducible transcription repressor HrcA (347 aa).

Belongs to the HrcA family.

In terms of biological role, negative regulator of class I heat shock genes (grpE-dnaK-dnaJ and groELS operons). Prevents heat-shock induction of these operons. The polypeptide is Heat-inducible transcription repressor HrcA (Rhodococcus erythropolis (strain PR4 / NBRC 100887)).